Here is a 186-residue protein sequence, read N- to C-terminus: dCTP deaminase (186 aa).

A dCTP-binding site is contributed by 107–112 (KSTYAR). The active-site Proton donor/acceptor is the Glu-133. The dCTP site is built by Gln-152, Tyr-166, and Gln-176.

It belongs to the dCTP deaminase family. As to quaternary structure, homotrimer.

It catalyses the reaction dCTP + H2O + H(+) = dUTP + NH4(+). The protein operates within pyrimidine metabolism; dUMP biosynthesis; dUMP from dCTP (dUTP route): step 1/2. In terms of biological role, catalyzes the deamination of dCTP to dUTP. This is dCTP deaminase from Campylobacter jejuni (strain RM1221).